The following is a 488-amino-acid chain: Rhamnulokinase (488 aa).

ATP is bound at residue 13-17 (ASSGR). The cysteines at positions 68 and 222 are disulfide-linked. Residues glycine 83 and 236–238 (HDT) each bind substrate. The Proton acceptor role is filled by aspartate 237. Threonine 259 contributes to the ATP binding site. Asparagine 296 lines the substrate pocket. Glutamine 304 is a binding site for ATP. Cysteine 353 and cysteine 370 are joined by a disulfide. Glycine 402 is an ATP binding site. Cysteines 413 and 417 form a disulfide.

It belongs to the rhamnulokinase family. Requires Mg(2+) as cofactor.

The catalysed reaction is L-rhamnulose + ATP = L-rhamnulose 1-phosphate + ADP + H(+). It participates in carbohydrate degradation; L-rhamnose degradation; glycerone phosphate from L-rhamnose: step 2/3. In terms of biological role, involved in the catabolism of L-rhamnose (6-deoxy-L-mannose). Catalyzes the transfer of the gamma-phosphate group from ATP to the 1-hydroxyl group of L-rhamnulose to yield L-rhamnulose 1-phosphate. This chain is Rhamnulokinase, found in Klebsiella pneumoniae subsp. pneumoniae (strain ATCC 700721 / MGH 78578).